The following is a 296-amino-acid chain: GTPase Era (296 aa).

An Era-type G domain is found at 3 to 170 (KSGFVTIVGR…KELMFKYIPE (168 aa)). A G1 region spans residues 11 to 18 (GRPNVGKS). 11-18 (GRPNVGKS) provides a ligand contact to GTP. Positions 37 to 41 (QTTRN) are G2. The tract at residues 58–61 (DTPG) is G3. GTP is bound by residues 58 to 62 (DTPGI) and 120 to 123 (NKID). The segment at 120–123 (NKID) is G4. Positions 149–151 (ISA) are G5. One can recognise a KH type-2 domain in the interval 201–278 (LSEEVPHGIA…YIRLWVKVKE (78 aa)).

Belongs to the TRAFAC class TrmE-Era-EngA-EngB-Septin-like GTPase superfamily. Era GTPase family. Monomer.

The protein localises to the cytoplasm. Its subcellular location is the cell membrane. An essential GTPase that binds both GDP and GTP, with rapid nucleotide exchange. Plays a role in 16S rRNA processing and 30S ribosomal subunit biogenesis and possibly also in cell cycle regulation and energy metabolism. This Clostridium botulinum (strain Langeland / NCTC 10281 / Type F) protein is GTPase Era.